The primary structure comprises 299 residues: ATP phosphoribosyltransferase (299 aa).

The protein belongs to the ATP phosphoribosyltransferase family. Long subfamily. In terms of assembly, equilibrium between an active dimeric form, an inactive hexameric form and higher aggregates. Interconversion between the various forms is largely reversible and is influenced by the natural substrates and inhibitors of the enzyme. Mg(2+) serves as cofactor.

The protein localises to the cytoplasm. It catalyses the reaction 1-(5-phospho-beta-D-ribosyl)-ATP + diphosphate = 5-phospho-alpha-D-ribose 1-diphosphate + ATP. Its pathway is amino-acid biosynthesis; L-histidine biosynthesis; L-histidine from 5-phospho-alpha-D-ribose 1-diphosphate: step 1/9. Its activity is regulated as follows. Feedback inhibited by histidine. Catalyzes the condensation of ATP and 5-phosphoribose 1-diphosphate to form N'-(5'-phosphoribosyl)-ATP (PR-ATP). Has a crucial role in the pathway because the rate of histidine biosynthesis seems to be controlled primarily by regulation of HisG enzymatic activity. This is ATP phosphoribosyltransferase from Buchnera aphidicola subsp. Melaphis rhois.